We begin with the raw amino-acid sequence, 970 residues long: Sodium/calcium exchanger 1 (970 aa).

The first 32 residues, 1 to 32 (MLQLRLLPTFSMGCHLLAVVALLFSHVDLISA), serve as a signal peptide directing secretion. The Extracellular segment spans residues 33 to 71 (ETEMEGEGNETGECTGSYYCKKGVILPIWEPQDPSFGDK). Asn41 carries an N-linked (GlcNAc...) asparagine glycan. Residues 72–92 (IARATVYFVAMVYMFLGVSII) form a helical membrane-spanning segment. The Cytoplasmic portion of the chain corresponds to 93–133 (ADRFMSSIEVITSQEKEITIKKPNGETTKTTVRIWNETVSN). A helical membrane pass occupies residues 134–154 (LTLMALGSSAPEILLSVIEVC). An Alpha-1 repeat occupies 138-178 (ALGSSAPEILLSVIEVCGHNFTAGDLGPSTIVGSAAFNMFI). Residues 155 to 167 (GHNFTAGDLGPST) lie on the Extracellular side of the membrane. Asn157 is a glycosylation site (N-linked (GlcNAc...) asparagine). Residues 168–188 (IVGSAAFNMFIIIALCVYVVP) form a helical membrane-spanning segment. The Cytoplasmic portion of the chain corresponds to 189 to 201 (DGETRKIKHLRVF). The helical transmembrane segment at 202 to 222 (FVTAAWSIFAYTWLYIILSVI) threads the bilayer. Over 223-228 (SPGVVE) the chain is Extracellular. Residues 229-249 (VWEGLLTFFFFPICVVFAWVA) traverse the membrane as a helical segment. At 250–797 (DRRLLFYKYV…FVPPTEYWNG (548 aa)) the chain is on the cytoplasmic side. The putative calmodulin-binding region stretch occupies residues 251–270 (RRLLFYKYVYKRYRAGKQRG). Phosphoserine is present on residues Ser282 and Ser389. Calx-beta domains lie at 393 to 493 (VNTE…VHLS) and 524 to 624 (ATVT…LEIG). Ca(2+) contacts are provided by Glu417, Asp453, Asp478, Asp479, Ile481, Glu483, Glu486, Asp530, Asp531, Asp532, Glu548, Asp584, Asp610, Glu611, Glu612, and Glu715. The chain crosses the membrane as a helical span at residues 798 to 818 (WACFIVSILMIGILTAFIGDL). At 819 to 821 (ASH) the chain is on the extracellular side. A helical membrane pass occupies residues 822 to 842 (FGCTIGLKDSVTAVVFVALGT). One copy of the Alpha-2 repeat lies at 839-875 (ALGTSVPDTFASKVAATQDQYADASIGNVTGSNAVNV). Residues 843–871 (SVPDTFASKVAATQDQYADASIGNVTGSN) lie on the Cytoplasmic side of the membrane. The chain crosses the membrane as a helical span at residues 872–892 (AVNVFLGIGVAWSIAAIYHAA). Over 893–903 (NGEQFKVSPGT) the chain is Extracellular. A helical transmembrane segment spans residues 904-924 (LAFSVTLFTIFAFINVGVLLY). Over 925 to 941 (RRRPEIGGELGGPRTAK) the chain is Cytoplasmic. Residues 942-962 (LLTSCLFVLLWLLYIFFSSLE) form a helical membrane-spanning segment. Residues 963-970 (AYCHIKGF) are Extracellular-facing.

The protein belongs to the Ca(2+):cation antiporter (CaCA) (TC 2.A.19) family. SLC8 subfamily. As to expression, cardiac sarcolemma (at protein level).

The protein resides in the cell membrane. It localises to the sarcolemma. It carries out the reaction Ca(2+)(in) + 3 Na(+)(out) = Ca(2+)(out) + 3 Na(+)(in). With respect to regulation, activated by micromolar levels of Ca(2+). In the absence of regulatory Ca(2+), channels open rapidly, and then inactivate rapidly. Inactivation is enhanced by Na(+) and is inhibited by micromolar levels of Ca(2+). In terms of biological role, mediates the exchange of one Ca(2+) ion against three to four Na(+) ions across the cell membrane, and thereby contributes to the regulation of cytoplasmic Ca(2+) levels and Ca(2+)-dependent cellular processes. Contributes to Ca(2+) transport during excitation-contraction coupling in muscle. In a first phase, voltage-gated channels mediate the rapid increase of cytoplasmic Ca(2+) levels due to release of Ca(2+) stores from the endoplasmic reticulum. SLC8A1 mediates the export of Ca(2+) from the cell during the next phase, so that cytoplasmic Ca(2+) levels rapidly return to baseline. Required for normal embryonic heart development and the onset of heart contractions. The chain is Sodium/calcium exchanger 1 (SLC8A1) from Canis lupus familiaris (Dog).